The primary structure comprises 78 residues: Translation initiation factor IF-1 (78 aa).

The S1-like domain maps to 2–78 (SKNNLNETES…TRARITYRFK (77 aa)).

The protein belongs to the IF-1 family. In terms of assembly, component of the 30S ribosomal translation pre-initiation complex which assembles on the 30S ribosome in the order IF-2 and IF-3, IF-1 and N-formylmethionyl-tRNA(fMet); mRNA recruitment can occur at any time during PIC assembly.

The protein resides in the cytoplasm. Its function is as follows. One of the essential components for the initiation of protein synthesis. Stabilizes the binding of IF-2 and IF-3 on the 30S subunit to which N-formylmethionyl-tRNA(fMet) subsequently binds. Helps modulate mRNA selection, yielding the 30S pre-initiation complex (PIC). Upon addition of the 50S ribosomal subunit IF-1, IF-2 and IF-3 are released leaving the mature 70S translation initiation complex. This is Translation initiation factor IF-1 from Onion yellows phytoplasma (strain OY-M).